We begin with the raw amino-acid sequence, 418 residues long: L-rhamnose isomerase (418 aa).

Mn(2+)-binding residues include histidine 262, aspartate 294, and aspartate 296.

The protein belongs to the rhamnose isomerase family. In terms of assembly, homotetramer. It depends on Mn(2+) as a cofactor.

The protein resides in the cytoplasm. The enzyme catalyses L-rhamnopyranose = L-rhamnulose. Its pathway is carbohydrate degradation; L-rhamnose degradation; glycerone phosphate from L-rhamnose: step 1/3. Functionally, catalyzes the interconversion of L-rhamnose and L-rhamnulose. The sequence is that of L-rhamnose isomerase from Yersinia pseudotuberculosis serotype O:1b (strain IP 31758).